Here is a 3672-residue protein sequence, read N- to C-terminus: Laminin-like protein epi-1 (3672 aa).

Residues 1–27 (MSPYDSSPWATKALFLIVTLLAQFTYS) form the signal peptide. The Laminin N-terminal domain occupies 28-297 (QVLTPSQITI…AIKEIMIGGR (270 aa)). Asparagine 121, asparagine 140, and asparagine 249 each carry an N-linked (GlcNAc...) asparagine glycan. Intrachain disulfides connect cysteine 298–cysteine 307, cysteine 300–cysteine 320, cysteine 322–cysteine 331, cysteine 334–cysteine 354, cysteine 357–cysteine 366, cysteine 359–cysteine 391, cysteine 394–cysteine 403, cysteine 406–cysteine 424, cysteine 427–cysteine 438, cysteine 429–cysteine 445, cysteine 447–cysteine 456, cysteine 459–cysteine 469, cysteine 472–cysteine 484, cysteine 474–cysteine 491, cysteine 493–cysteine 502, cysteine 505–cysteine 516, cysteine 519–cysteine 531, cysteine 521–cysteine 538, cysteine 540–cysteine 549, cysteine 552–cysteine 561, cysteine 564–cysteine 576, cysteine 566–cysteine 583, cysteine 585–cysteine 594, cysteine 597–cysteine 607, cysteine 610–cysteine 622, cysteine 612–cysteine 629, cysteine 631–cysteine 640, cysteine 643–cysteine 653, cysteine 656–cysteine 668, cysteine 658–cysteine 674, cysteine 676–cysteine 685, cysteine 688–cysteine 698, cysteine 701–cysteine 715, cysteine 703–cysteine 724, cysteine 726–cysteine 735, cysteine 738–cysteine 753, cysteine 756–cysteine 770, cysteine 758–cysteine 777, cysteine 779–cysteine 788, cysteine 791–cysteine 806, cysteine 809–cysteine 821, cysteine 811–cysteine 828, and cysteine 830–cysteine 839. Laminin EGF-like domains follow at residues 298-356 (CVCN…TCEA), 357-426 (CNCF…PCKV), 427-471 (CDCD…KCKP), 472-518 (CECN…GCVE), 519-563 (CVCD…DCKF), 564-609 (CNCD…NCKA), 610-655 (CACD…DCRG), 656-700 (CECL…ICEE), 701-755 (CNCN…GCRS), and 756-808 (CDCN…GCES). The N-linked (GlcNAc...) asparagine glycan is linked to asparagine 351. Asparagine 477 carries N-linked (GlcNAc...) asparagine glycosylation. N-linked (GlcNAc...) asparagine glycans are attached at residues asparagine 511 and asparagine 530. N-linked (GlcNAc...) asparagine glycosylation occurs at asparagine 634. An N-linked (GlcNAc...) asparagine glycan is attached at asparagine 761. Residues 809–839 (CHCDIGGALRAECDITSGQCKCRPRVTGLRC) form the Laminin EGF-like 11; truncated domain. N-linked (GlcNAc...) asparagine glycosylation is found at asparagine 1014 and asparagine 1341. 16 disulfides stabilise this stretch: cysteine 1415–cysteine 1427, cysteine 1417–cysteine 1434, cysteine 1436–cysteine 1445, cysteine 1448–cysteine 1458, cysteine 1461–cysteine 1469, cysteine 1463–cysteine 1476, cysteine 1478–cysteine 1487, cysteine 1490–cysteine 1503, cysteine 1506–cysteine 1520, cysteine 1508–cysteine 1527, cysteine 1529–cysteine 1538, cysteine 1541–cysteine 1551, cysteine 1554–cysteine 1566, cysteine 1556–cysteine 1573, cysteine 1575–cysteine 1584, and cysteine 1587–cysteine 1602. 4 consecutive Laminin EGF-like domains span residues 1415 to 1460 (CDCV…ECIK), 1461 to 1505 (CQCN…GCQK), 1506 to 1553 (CGCH…HCYG), and 1554 to 1604 (CSCN…GCVN). One can recognise a Laminin EGF-like 16; first part domain in the interval 1605-1614 (CFCFGVTDSC). The Laminin IV type A domain maps to 1615–1796 (RSSMYPVTIM…SVIKASSVEQ (182 aa)). N-linked (GlcNAc...) asparagine glycans are attached at residues asparagine 1705 and asparagine 1756. The 33-residue stretch at 1797–1829 (CQCPAPYTGPSCQLCASGYHRVQSGSFLGACVP) folds into the Laminin EGF-like 16; second part domain. Cystine bridges form between cysteine 1830–cysteine 1839, cysteine 1832–cysteine 1846, cysteine 1849–cysteine 1858, cysteine 1861–cysteine 1877, cysteine 1880–cysteine 1894, cysteine 1882–cysteine 1905, cysteine 1907–cysteine 1916, cysteine 1919–cysteine 1934, cysteine 1937–cysteine 1951, cysteine 1939–cysteine 1958, cysteine 1961–cysteine 1970, cysteine 1973–cysteine 1987, cysteine 1990–cysteine 2000, cysteine 1992–cysteine 2007, cysteine 2009–cysteine 2018, cysteine 2021–cysteine 2031, cysteine 2037–cysteine 2048, cysteine 2039–cysteine 2055, cysteine 2057–cysteine 2066, cysteine 2069–cysteine 2081, cysteine 2084–cysteine 2096, cysteine 2086–cysteine 2103, cysteine 2105–cysteine 2114, and cysteine 2117–cysteine 2129. Laminin EGF-like domains lie at 1830–1879 (CECN…DCMA), 1880–1936 (CACP…SCSP), 1937–1989 (CQCN…NCSS), 1990–2036 (CECS…GCQG), 2037–2083 (CHCG…GCDK), and 2084–2131 (CDCE…GCRR). N-linked (GlcNAc...) asparagine glycosylation occurs at asparagine 1868. Asparagine 1944 carries N-linked (GlcNAc...) asparagine glycosylation. N-linked (GlcNAc...) asparagine glycosylation occurs at asparagine 1986. N-linked (GlcNAc...) asparagine glycosylation is present at asparagine 2002. Residues asparagine 2159, asparagine 2207, asparagine 2231, asparagine 2235, asparagine 2401, asparagine 2421, asparagine 2487, and asparagine 2821 are each glycosylated (N-linked (GlcNAc...) asparagine). 3 consecutive Laminin G-like domains span residues 2693 to 2884 (GAHF…VNGA), 2896 to 3066 (ELVV…RSGC), and 3072 to 3235 (RTVS…LNGC). Cysteines 3040 and 3066 form a disulfide. Residue asparagine 3087 is glycosylated (N-linked (GlcNAc...) asparagine). The cysteines at positions 3209 and 3235 are disulfide-linked. Residues 3236–3294 (SLSDDENISTTTTAAPKPTDDSDVAVLPIDEEEESTTTTTTTTTEEPTEEPAEARPDGH) are disordered. Asparagine 3242 carries N-linked (GlcNAc...) asparagine glycosylation. The segment covering 3271 to 3280 (TTTTTTTTTE) has biased composition (low complexity). Laminin G-like domains follow at residues 3310 to 3482 (GFNF…TEQC) and 3488 to 3669 (PGMY…RNAC). Cysteines 3460 and 3482 form a disulfide. Residue asparagine 3541 is glycosylated (N-linked (GlcNAc...) asparagine). Cysteine 3633 and cysteine 3669 are oxidised to a cystine.

As to quaternary structure, laminin is a complex glycoprotein, consisting of three different polypeptide chains (alpha, beta, gamma), which are bound to each other by disulfide bonds into a cross-shaped molecule comprising one long and three short arms with globules at each end.

It localises to the secreted. The protein localises to the extracellular space. Its subcellular location is the extracellular matrix. It is found in the basement membrane. Binding to cells via a high affinity receptor, laminin is thought to mediate the attachment, migration and organization of cells into tissues during embryonic development by interacting with other extracellular matrix components. Required to assemble a stable basement membrane and for organizing receptor complexes and cytoskeletal components to the proper cell surfaces. During embryogenesis, does not require the presence of collagen type IV in order to associate with cell surfaces, prior to assembly of the prototypical basement membrane. During the formation of neuromuscular junctions at the larval stage, negatively regulates membrane protrusion from body wall muscles, probably downstream of the integrin complex formed by pat-2 and pat-3. Probably plays a distinct role from the related laminin subunit alpha lam-3. The sequence is that of Laminin-like protein epi-1 (epi-1) from Caenorhabditis elegans.